Consider the following 504-residue polypeptide: Malonyl-CoA decarboxylase, mitochondrial (504 aa).

The transit peptide at 1-50 (MRGLRRGLSRLGPRLGPWAVPRSLRRVLRAAGPWRGQSSAGSVSERGGAS) directs the protein to the mitochondrion. The alpha-helical domain stretch occupies residues 51–201 (MEEVLSRSVP…VLKNMLSEWF (151 aa)). The interval 202 to 504 (STGFLNLERV…VSQFQQNSKL (303 aa)) is catalytic domain. Ser340 functions as the Proton acceptor in the catalytic mechanism. His434 serves as the catalytic Proton donor. The Microbody targeting signal motif lies at 502–504 (SKL).

The protein resides in the mitochondrion. The protein localises to the cytoplasm. It localises to the peroxisome. The enzyme catalyses malonyl-CoA + H(+) = acetyl-CoA + CO2. It functions in the pathway metabolic intermediate biosynthesis; acetyl-CoA biosynthesis; acetyl-CoA from malonyl-CoA: step 1/1. Functionally, catalyzes the conversion of malonyl-CoA to acetyl-CoA. In the fatty acid biosynthesis MCD selectively removes malonyl-CoA and thus assures that methyl-malonyl-CoA is the only chain elongating substrate for fatty acid synthase and that fatty acids with multiple methyl side chains are produced. In Anser anser anser (Western greylag goose), this protein is Malonyl-CoA decarboxylase, mitochondrial (MLYCD).